A 223-amino-acid polypeptide reads, in one-letter code: Ribonuclease 3 (223 aa).

Residues 3-125 (LEKLQKKLGH…LIAAIYLDAG (123 aa)) enclose the RNase III domain. Residue glutamate 38 coordinates Mg(2+). The active site involves aspartate 42. Mg(2+) is bound by residues aspartate 111 and glutamate 114. Glutamate 114 is a catalytic residue. Positions 152–222 (DPKTRLQEFL…AQQAIEKLKI (71 aa)) constitute a DRBM domain.

Belongs to the ribonuclease III family. Homodimer. Requires Mg(2+) as cofactor.

It localises to the cytoplasm. It catalyses the reaction Endonucleolytic cleavage to 5'-phosphomonoester.. Digests double-stranded RNA. Involved in the processing of primary rRNA transcript to yield the immediate precursors to the large and small rRNAs (23S and 16S). Processes some mRNAs, and tRNAs when they are encoded in the rRNA operon. Processes pre-crRNA and tracrRNA of type II CRISPR loci if present in the organism. This is Ribonuclease 3 from Histophilus somni (strain 2336) (Haemophilus somnus).